We begin with the raw amino-acid sequence, 489 residues long: 5'-AMP-activated protein kinase subunit gamma-3 (489 aa).

The interval 1-95 is disordered; the sequence is MEPELEHTLP…TRQEATFPKA (95 aa). Over residues 32–47 the composition is skewed to polar residues; the sequence is GENSWPSPAVATSSER. 3 consecutive CBS domains span residues 197 to 258, 280 to 340, and 355 to 415; these read MATS…RSPL, CFKP…LLPR, and TFRD…HLDM. ADP-binding positions include Arg-225, 240–245, Val-285, 306–307, and Lys-325; these read MLTITD and HR. Residues Arg-225, 240–245, Val-285, His-306, 306–307, Lys-325, Thr-355, Ala-360, 381–382, 397–400, Arg-424, Leu-432, His-453, 453–454, and 469–472 each bind AMP; these read MLTITD, HR, SA, SRFD, and SLSD. ATP is bound by residues Arg-225, 240 to 245, Val-285, 306 to 307, Arg-307, and Lys-325; these read MLTITD and HR. The AMPK pseudosubstrate motif lies at 293–314; sequence LFEAVYALIKNRIHRLPVLDPV. Residues 397–400, Arg-424, Leu-432, and 453–454 contribute to the ADP site; these read SRFD and HR. ATP-binding positions include 397–400, Arg-424, Leu-432, and 453–454; these read SRFD and HR. A CBS 4 domain is found at 427–486; sequence CLEGVLSCQPHESLGEVIDRIAREQVHRLVLVDETQHLLGVVSLSDILQALVLSPAGIDA.

The protein belongs to the 5'-AMP-activated protein kinase gamma subunit family. AMPK is a heterotrimer of an alpha catalytic subunit (PRKAA1 or PRKAA2), a beta (PRKAB1 or PRKAB2) and a gamma non-catalytic subunits (PRKAG1, PRKAG2 or PRKAG3). Interacts with FNIP1 and FNIP2. Phosphorylated by ULK1; leading to negatively regulate AMPK activity and suggesting the existence of a regulatory feedback loop between ULK1 and AMPK. In terms of processing, glycosylated; O-GlcNAcylated by OGT, promoting the AMP-activated protein kinase (AMPK) activity.

In terms of biological role, AMP/ATP-binding subunit of AMP-activated protein kinase (AMPK), an energy sensor protein kinase that plays a key role in regulating cellular energy metabolism. In response to reduction of intracellular ATP levels, AMPK activates energy-producing pathways and inhibits energy-consuming processes: inhibits protein, carbohydrate and lipid biosynthesis, as well as cell growth and proliferation. AMPK acts via direct phosphorylation of metabolic enzymes, and by longer-term effects via phosphorylation of transcription regulators. AMPK also acts as a regulator of cellular polarity by remodeling the actin cytoskeleton; probably by indirectly activating myosin. The AMPK gamma3 subunit is a non-catalytic subunit with a regulatory role in muscle energy metabolism. It mediates binding to AMP, ADP and ATP, leading to AMPK activation or inhibition: AMP-binding results in allosteric activation of alpha catalytic subunit (PRKAA1 or PRKAA2) both by inducing phosphorylation and preventing dephosphorylation of catalytic subunits. ADP also stimulates phosphorylation, without stimulating already phosphorylated catalytic subunit. ATP promotes dephosphorylation of catalytic subunit, rendering the AMPK enzyme inactive. This chain is 5'-AMP-activated protein kinase subunit gamma-3 (Prkag3), found in Mus musculus (Mouse).